Here is a 282-residue protein sequence, read N- to C-terminus: Eukaryotic translation initiation factor 3 subunit G (282 aa).

The tract at residues 1–27 is disordered; sequence MSSSKSLDWADDEDYGTGLPSIQTFDN. Phosphoserine occurs at positions 160 and 164. An RRM domain is found at 202–280; it reads ATLRVTNLSD…LILRCEFSKP (79 aa).

It belongs to the eIF-3 subunit G family. As to quaternary structure, component of the eukaryotic translation initiation factor 3 (eIF-3) complex. The eIF-3 complex appears to include tif32/eif3a, SPAC25G10.08/eif3b, tif33/eif3c, SPBC4C3.07/eif3f, tif35/eif3g and sum1/eif3i. This set of common subunits may also associate exclusively with either moe1/eif3d and int6/eif3e, or with SPAC821.05/eif3h and SPAC1751.03/eif3m. The eIF-3 complex may also include SPAC3A12.13c/eif3j.

It localises to the cytoplasm. In terms of biological role, RNA-binding component of the eukaryotic translation initiation factor 3 (eIF-3) complex, which is involved in protein synthesis of a specialized repertoire of mRNAs and, together with other initiation factors, stimulates binding of mRNA and methionyl-tRNAi to the 40S ribosome. The eIF-3 complex specifically targets and initiates translation of a subset of mRNAs involved in cell proliferation. This subunit can bind 18S rRNA. The polypeptide is Eukaryotic translation initiation factor 3 subunit G (tif35) (Schizosaccharomyces pombe (strain 972 / ATCC 24843) (Fission yeast)).